A 288-amino-acid chain; its full sequence is UPF0276 protein VP3015 (288 aa).

The protein belongs to the UPF0276 family.

The sequence is that of UPF0276 protein VP3015 from Vibrio parahaemolyticus serotype O3:K6 (strain RIMD 2210633).